The sequence spans 185 residues: MYKLNSSIMSLPEGAIKKNINSYELIKTPFVIFQADKNDFDKMSQKAVSNIGTESIISKVFYSPENIKLIQKQIIKRVFKLTKGSYLIDKQNKEDLLIVMKSVYMQNASGLNTKITSIKQIRNIIADLNNNVVNEVTPGIMTEVKSYVRYVNDVFNPVMPLDRPVNVSNSGTKSLPSVSTLYSNN.

This is an uncharacterized protein from Acanthamoeba polyphaga (Amoeba).